The primary structure comprises 179 residues: Large ribosomal subunit protein uL5 (179 aa).

The protein belongs to the universal ribosomal protein uL5 family. Part of the 50S ribosomal subunit; part of the 5S rRNA/L5/L18/L25 subcomplex. Contacts the 5S rRNA and the P site tRNA. Forms a bridge to the 30S subunit in the 70S ribosome.

Its function is as follows. This is one of the proteins that bind and probably mediate the attachment of the 5S RNA into the large ribosomal subunit, where it forms part of the central protuberance. In the 70S ribosome it contacts protein S13 of the 30S subunit (bridge B1b), connecting the 2 subunits; this bridge is implicated in subunit movement. Contacts the P site tRNA; the 5S rRNA and some of its associated proteins might help stabilize positioning of ribosome-bound tRNAs. The polypeptide is Large ribosomal subunit protein uL5 (Tolumonas auensis (strain DSM 9187 / NBRC 110442 / TA 4)).